The sequence spans 111 residues: Secreted RxLR effector protein 81 (111 aa).

Residues 1–16 form the signal peptide; the sequence is MLVSMLLIIFPNGVSL. Asn52 carries N-linked (GlcNAc...) asparagine glycosylation. Residues 73 to 92 are disordered; sequence KKFSSSDEDKSRDVRRRLRP. A RxLR-dEER motif is present at residues 88–91; the sequence is RRLR.

Belongs to the RxLR effector family.

Its subcellular location is the secreted. It is found in the host nucleus. The protein localises to the host cytoplasm. Its function is as follows. Secreted effector that partially suppresses the host cell death induced by cell death-inducing proteins. The polypeptide is Secreted RxLR effector protein 81 (Plasmopara viticola (Downy mildew of grapevine)).